Reading from the N-terminus, the 246-residue chain is 4-hydroxy-tetrahydrodipicolinate reductase (246 aa).

7 to 12 (GCSGRM) contacts NAD(+). R34 provides a ligand contact to NADP(+). Residues 76 to 78 (ATT) and 102 to 105 (CPNT) each bind NAD(+). H135 acts as the Proton donor/acceptor in catalysis. A (S)-2,3,4,5-tetrahydrodipicolinate-binding site is contributed by H136. The active-site Proton donor is the K139. 145–146 (GT) serves as a coordination point for (S)-2,3,4,5-tetrahydrodipicolinate.

This sequence belongs to the DapB family.

It localises to the cytoplasm. It carries out the reaction (S)-2,3,4,5-tetrahydrodipicolinate + NAD(+) + H2O = (2S,4S)-4-hydroxy-2,3,4,5-tetrahydrodipicolinate + NADH + H(+). The enzyme catalyses (S)-2,3,4,5-tetrahydrodipicolinate + NADP(+) + H2O = (2S,4S)-4-hydroxy-2,3,4,5-tetrahydrodipicolinate + NADPH + H(+). Its pathway is amino-acid biosynthesis; L-lysine biosynthesis via DAP pathway; (S)-tetrahydrodipicolinate from L-aspartate: step 4/4. Catalyzes the conversion of 4-hydroxy-tetrahydrodipicolinate (HTPA) to tetrahydrodipicolinate. The protein is 4-hydroxy-tetrahydrodipicolinate reductase of Chlamydia caviae (strain ATCC VR-813 / DSM 19441 / 03DC25 / GPIC) (Chlamydophila caviae).